The following is a 749-amino-acid chain: Catalase-peroxidase (749 aa).

Residues Met1–His12 show a composition bias toward basic and acidic residues. The interval Met1–Thr40 is disordered. A compositionally biased stretch (polar residues) spans Asp14–Glu24. The segment at residues Trp113–Tyr240 is a cross-link (tryptophyl-tyrosyl-methioninium (Trp-Tyr) (with M-266)). His114 serves as the catalytic Proton acceptor. A cross-link (tryptophyl-tyrosyl-methioninium (Tyr-Met) (with W-113)) is located at residues Tyr240 to Met266. Position 281 (His281) interacts with heme b.

This sequence belongs to the peroxidase family. Peroxidase/catalase subfamily. Homodimer or homotetramer. It depends on heme b as a cofactor. Formation of the three residue Trp-Tyr-Met cross-link is important for the catalase, but not the peroxidase activity of the enzyme.

The catalysed reaction is H2O2 + AH2 = A + 2 H2O. It catalyses the reaction 2 H2O2 = O2 + 2 H2O. Bifunctional enzyme with both catalase and broad-spectrum peroxidase activity. In Mycobacterium sp. (strain JLS), this protein is Catalase-peroxidase.